The chain runs to 88 residues: Arminin 1c (88 aa).

The signal sequence occupies residues 1–18 (MKPVFVILFLTCIAFTYA). The propeptide occupies 19-57 (ESYEDVKEEIKNEVEREIFEDLEEESDVLDSNVREFNDA). V85 bears the Valine amide mark.

Belongs to the arminin family. As to expression, expressed in entodermal epithelium along the body column.

The protein localises to the secreted. It localises to the target cell membrane. In terms of biological role, antimicrobial peptide with a broad-spectrum antimicrobial activity. Keeps its antibacterial activity under a wide range of salt concentrations that mimic physiological conditions of human blood, which is surprising, since Hydra is an obligate freshwater animal with nearly no salt tolerance. Does not affect red blood cells. The protein is Arminin 1c of Hydra vulgaris (Hydra).